The primary structure comprises 272 residues: Undecaprenyl-diphosphatase (272 aa).

The next 8 membrane-spanning stretches (helical) occupy residues Phe4 to Ile24, Gly43 to Tyr63, Ile86 to Ile106, Val109 to Trp129, Ile145 to Thr165, Thr186 to Ile206, Val222 to Val242, and Val249 to Asn269.

Belongs to the UppP family.

It is found in the cell inner membrane. It carries out the reaction di-trans,octa-cis-undecaprenyl diphosphate + H2O = di-trans,octa-cis-undecaprenyl phosphate + phosphate + H(+). Functionally, catalyzes the dephosphorylation of undecaprenyl diphosphate (UPP). Confers resistance to bacitracin. In Acinetobacter baumannii (strain SDF), this protein is Undecaprenyl-diphosphatase.